Consider the following 740-residue polypeptide: Ethylene receptor 1 (740 aa).

The next 3 helical transmembrane spans lie at 23 to 43 (ISDF…IYFV), 54 to 74 (VLVQ…INLW), and 92 to 112 (VLTA…IPDL). Cu cation contacts are provided by Cys65 and His69. One can recognise a GAF domain in the interval 158–307 (DRHTILKTTL…VVADQVAVAL (150 aa)). The Histidine kinase domain occupies 350–588 (VMNHEMRTPM…TFIVKLGIAD (239 aa)). His353 carries the post-translational modification Phosphohistidine; by autocatalysis. The region spanning 614-731 (KVLVMDDNGV…KMRSVLSELI (118 aa)) is the Response regulatory domain. Asp662 bears the 4-aspartylphosphate mark.

Belongs to the ethylene receptor family. Homodimer; disulfide-linked. It depends on Cu cation as a cofactor. Activation probably requires a transfer of a phosphate group between a His in the transmitter domain and an Asp of the receiver domain. As to expression, in seeds and placenta.

It is found in the endoplasmic reticulum membrane. The enzyme catalyses ATP + protein L-histidine = ADP + protein N-phospho-L-histidine.. Functionally, may act early in the ethylene signal transduction pathway, possibly as an ethylene receptor, or as a regulator of the pathway. The sequence is that of Ethylene receptor 1 (ETR1) from Cucumis melo var. cantalupensis (Netted muskmelon).